The following is a 212-amino-acid chain: Ribonuclease HII (212 aa).

Residues 22–211 (GLVAGVDEVG…VADRILLQNT (190 aa)) enclose the RNase H type-2 domain. Positions 28, 29, and 120 each coordinate a divalent metal cation.

It belongs to the RNase HII family. It depends on Mn(2+) as a cofactor. Mg(2+) serves as cofactor.

The protein localises to the cytoplasm. The enzyme catalyses Endonucleolytic cleavage to 5'-phosphomonoester.. Functionally, endonuclease that specifically degrades the RNA of RNA-DNA hybrids. The sequence is that of Ribonuclease HII from Shewanella frigidimarina (strain NCIMB 400).